The primary structure comprises 344 residues: Cyclin-dependent kinase 20 (344 aa).

Residues 4 to 288 enclose the Protein kinase domain; that stretch reads YSILGRIGEG…ARQALLHPYF (285 aa). Residues 10–18 and Lys-33 each bind ATP; that span reads IGEGAHGIV. Catalysis depends on Asp-127, which acts as the Proton acceptor.

Belongs to the protein kinase superfamily. CMGC Ser/Thr protein kinase family. CDC2/CDKX subfamily. In terms of assembly, monomer. Interacts with tbc1d32.

The protein localises to the nucleus. It is found in the cytoplasm. It localises to the cell projection. The protein resides in the cilium. It catalyses the reaction L-seryl-[protein] + ATP = O-phospho-L-seryl-[protein] + ADP + H(+). It carries out the reaction L-threonyl-[protein] + ATP = O-phospho-L-threonyl-[protein] + ADP + H(+). Its function is as follows. Involved in cell growth. Activates cdk2, a kinase involved in the control of the cell cycle, by phosphorylating residue 'Thr-160'. Required for high-level Shh responses in the developing neural tube. Together with tbc1d32, controls the structure of the primary cilium by coordinating assembly of the ciliary membrane and axoneme, allowing gli2 to be properly activated in response to SHH signaling. This chain is Cyclin-dependent kinase 20 (cdk20), found in Danio rerio (Zebrafish).